The sequence spans 547 residues: 2-succinyl-5-enolpyruvyl-6-hydroxy-3-cyclohexene-1-carboxylate synthase (547 aa).

This sequence belongs to the TPP enzyme family. MenD subfamily. In terms of assembly, homodimer. Requires Mg(2+) as cofactor. Mn(2+) is required as a cofactor. The cofactor is thiamine diphosphate.

It carries out the reaction isochorismate + 2-oxoglutarate + H(+) = 5-enolpyruvoyl-6-hydroxy-2-succinyl-cyclohex-3-ene-1-carboxylate + CO2. Its pathway is quinol/quinone metabolism; 1,4-dihydroxy-2-naphthoate biosynthesis; 1,4-dihydroxy-2-naphthoate from chorismate: step 2/7. The protein operates within quinol/quinone metabolism; menaquinone biosynthesis. Functionally, catalyzes the thiamine diphosphate-dependent decarboxylation of 2-oxoglutarate and the subsequent addition of the resulting succinic semialdehyde-thiamine pyrophosphate anion to isochorismate to yield 2-succinyl-5-enolpyruvyl-6-hydroxy-3-cyclohexene-1-carboxylate (SEPHCHC). The polypeptide is 2-succinyl-5-enolpyruvyl-6-hydroxy-3-cyclohexene-1-carboxylate synthase (Mycobacterium sp. (strain KMS)).